We begin with the raw amino-acid sequence, 158 residues long: Transcriptional repressor NrdR (158 aa).

Residues 3–34 fold into a zinc finger; it reads CPSCQNTDSRVLESRAADGGRSVRRRRECLNC. Residues 49–139 form the ATP-cone domain; sequence ITVIKRDGCR…VYRQFRGIDD (91 aa).

This sequence belongs to the NrdR family. It depends on Zn(2+) as a cofactor.

Functionally, negatively regulates transcription of bacterial ribonucleotide reductase nrd genes and operons by binding to NrdR-boxes. The polypeptide is Transcriptional repressor NrdR (Synechococcus sp. (strain CC9902)).